The following is a 428-amino-acid chain: tRNA dimethylallyltransferase (428 aa).

Residue glycine 21–serine 28 participates in ATP binding. Position 23–28 (threonine 23–serine 28) interacts with dimethylallyl diphosphate. 2 interaction with substrate tRNA regions span residues aspartate 46–glutamine 49 and arginine 170–arginine 174. The core aggregation region stretch occupies residues phenylalanine 199–tyrosine 207. Residues proline 210 to glutamate 232 are interaction with isopentenylpyrophosphate transferase. Interaction with substrate tRNA regions lie at residues glutamine 256–isoleucine 258 and arginine 284–lysine 302. A Matrin-type zinc finger spans residues tyrosine 373–arginine 409. Zn(2+) contacts are provided by cysteine 375, cysteine 378, histidine 397, and histidine 403.

It belongs to the IPP transferase family.

The protein localises to the cytoplasm. Its subcellular location is the mitochondrion. It localises to the nucleus. It carries out the reaction adenosine(37) in tRNA + dimethylallyl diphosphate = N(6)-dimethylallyladenosine(37) in tRNA + diphosphate. In terms of biological role, catalyzes the transfer of a dimethylallyl group onto the adenine at position 37 in the anticodon loop on a specific subset of tRNAs both in the cytosol and the mitochondrion, leading to the formation of N6-(dimethylallyl)adenosine (i(6)A). This modification optimizes the codon:anticodon fit in the ribosome and promotes translational fidelity. Competes with the farnesyl pyrophosphate synthase ERG20 for the common substrate dimethylallyl diphosphate (DMAPP). This Saccharomyces cerevisiae (strain ATCC 204508 / S288c) (Baker's yeast) protein is tRNA dimethylallyltransferase (MOD5).